Reading from the N-terminus, the 202-residue chain is B-cell CLL/lymphoma 7 protein family member B (202 aa).

A disordered region spans residues 53–202 (DSKEKEKSKS…PAVPQTASES (150 aa)). Positions 90-99 (ENSNQSSVSD) are enriched in polar residues. The span at 107 to 123 (SSTNSSPSPQQSESLSP) shows a compositional bias: low complexity. Residues S114, S118, S120, S122, S127, S148, and S152 each carry the phosphoserine modification.

Belongs to the BCL7 family.

Functionally, positive regulator of apoptosis. Plays a role in the Wnt signaling pathway, negatively regulating the expression of Wnt signaling components CTNNB1 and HMGA1. Involved in cell cycle progression, maintenance of the nuclear structure and stem cell differentiation. May play a role in lung tumor development or progression. This chain is B-cell CLL/lymphoma 7 protein family member B (BCL7B), found in Bos taurus (Bovine).